We begin with the raw amino-acid sequence, 278 residues long: UPF0276 protein Shew_2240 (278 aa).

Belongs to the UPF0276 family.

The protein is UPF0276 protein Shew_2240 of Shewanella loihica (strain ATCC BAA-1088 / PV-4).